Consider the following 425-residue polypeptide: Melibiose permease (425 aa).

Topologically, residues 1–13 (MNTTTCTHKDNPN) are cytoplasmic. A helical transmembrane segment spans residues 14–34 (FWIFGLFFFLYFFIMATCFPF). Residues 35–50 (LPIWLSDIIGLNKTHT) are Periplasmic-facing. The helical transmembrane segment at 51 to 71 (GIVFSCISLSAIAFQPVLGVI) threads the bilayer. Residues 72–80 (SDKLGLKKH) lie on the Cytoplasmic side of the membrane. Residues 81–101 (LLWIISVLLFLFAPFFLYVFA) traverse the membrane as a helical segment. At 102 to 107 (PLLKTN) the chain is on the periplasmic side. A helical membrane pass occupies residues 108–128 (IWLGALSGGLYIGFVFSAGSG). The Cytoplasmic segment spans residues 129-149 (AIEAYIERVSRNSAFEYGKAR). The helical transmembrane segment at 150-170 (MFGCLGWGLCASTGGILFGID) threads the bilayer. Position 171 (Pro-171) is a topological domain, periplasmic. The helical transmembrane segment at 172–192 (SYVFWMGSAAALLLMLLLVVA) threads the bilayer. The Cytoplasmic portion of the chain corresponds to 193–227 (KPKPNQTAQVMNALGANQPQITAKKVFNLFRQRRM). Residues 228–248 (WMFILYVIGVACVYDVFDQQF) traverse the membrane as a helical segment. Residues 249-267 (ATFFKTFFATPQEGTRAFG) lie on the Periplasmic side of the membrane. The chain crosses the membrane as a helical span at residues 268-288 (FATTAGEICNAIIMFCSPWII). Residues 289–297 (NRIGAKNTL) lie on the Cytoplasmic side of the membrane. Residues 298–318 (LIAGLIMATRIIGSSFATTAV) form a helical membrane-spanning segment. The Periplasmic portion of the chain corresponds to 319–325 (EVIALKM). A helical transmembrane segment spans residues 326–346 (LHALEVPFLLVGAFKYITGVF). The Cytoplasmic segment spans residues 347 to 353 (DTRLSAT). The helical transmembrane segment at 354-374 (IYLIGFQFAKQSAAIFLSAFA) threads the bilayer. Residues 375 to 385 (GNMYDRIGFQE) lie on the Periplasmic side of the membrane. The chain crosses the membrane as a helical span at residues 386–406 (TYLMLGCFVLAITVVSAFTLS). The Cytoplasmic segment spans residues 407–425 (SRQEIAAAAGAAALTSQSR).

It belongs to the major facilitator superfamily. Oligosaccharide:H(+) symporter (OHS) (TC 2.A.1.5) family.

The protein localises to the cell inner membrane. Responsible for transport of melibiose into the cell, with the concomitant import of a proton (symport system). Can also transport lactose, and has weak activity with maltose. Cannot transport the analog methyl-1-thio-beta,D-galactopyranoside (TMG). This is Melibiose permease from Enterobacter cloacae subsp. cloacae (strain ATCC 13047 / DSM 30054 / NBRC 13535 / NCTC 10005 / WDCM 00083 / NCDC 279-56).